The following is a 168-amino-acid chain: N-alpha-acetyltransferase (168 aa).

The N-acetyltransferase domain maps to 13–168; the sequence is YQIRLATLSD…EDAYLMAAPL (156 aa). Tyr38 is a substrate binding site. His89 lines the Zn(2+) pocket. Residues 93 to 95 and 101 to 106 each bind acetyl-CoA; these read IAV and KIGVGT. Residues 93-95 and 101-106 each bind CoA; these read IAV and KIGVGT. Residue Glu128 participates in Zn(2+) binding. Acetyl-CoA contacts are provided by residues Asn133 and 140-142; that span reads YKK. Asn133 is a CoA binding site. Tyr155 is a substrate binding site.

The protein belongs to the acetyltransferase family. ARD1 subfamily. In terms of assembly, homodimer.

The protein resides in the cytoplasm. The catalysed reaction is N-terminal L-alanyl-[protein] + acetyl-CoA = N-terminal N(alpha)-acetyl-L-alanyl-[protein] + CoA + H(+). It catalyses the reaction N-terminal L-seryl-[protein] + acetyl-CoA = N-terminal N(alpha)-acetyl-L-seryl-[protein] + CoA + H(+). The enzyme catalyses N-terminal L-methionyl-L-leucyl-[protein] + acetyl-CoA = N-terminal N(alpha)-acetyl-L-methionyl-L-leucyl-[protein] + CoA + H(+). It carries out the reaction N-terminal L-methionyl-L-glutamyl-[protein] + acetyl-CoA = N-terminal N(alpha)-acetyl-L-methionyl-L-glutamyl-[protein] + CoA + H(+). In terms of biological role, displays alpha (N-terminal) acetyltransferase activity. Catalyzes the covalent attachment of an acetyl moiety from acetyl-CoA to the free alpha-amino group at the N-terminus of a protein. This chain is N-alpha-acetyltransferase, found in Sulfolobus acidocaldarius (strain ATCC 33909 / DSM 639 / JCM 8929 / NBRC 15157 / NCIMB 11770).